A 266-amino-acid chain; its full sequence is Undecaprenyl-diphosphatase (266 aa).

7 consecutive transmembrane segments (helical) span residues 41-61, 82-102, 106-126, 159-179, 191-211, 213-233, and 246-266; these read YAYS…LIYF, LVYI…LYYV, WLVV…AVVL, AVSV…LLLL, FVLV…SEGG, VATA…IITI, and VLVN…RIIF.

This sequence belongs to the UppP family.

The protein resides in the cell membrane. The catalysed reaction is di-trans,octa-cis-undecaprenyl diphosphate + H2O = di-trans,octa-cis-undecaprenyl phosphate + phosphate + H(+). In terms of biological role, catalyzes the dephosphorylation of undecaprenyl diphosphate (UPP). The polypeptide is Undecaprenyl-diphosphatase (Pyrobaculum aerophilum (strain ATCC 51768 / DSM 7523 / JCM 9630 / CIP 104966 / NBRC 100827 / IM2)).